Reading from the N-terminus, the 468-residue chain is ATP synthase subunit beta 2 (468 aa).

Residue 145–152 (GGAGVGKT) coordinates ATP.

It belongs to the ATPase alpha/beta chains family. F-type ATPases have 2 components, CF(1) - the catalytic core - and CF(0) - the membrane proton channel. CF(1) has five subunits: alpha(3), beta(3), gamma(1), delta(1), epsilon(1). CF(0) has three main subunits: a(1), b(2) and c(9-12). The alpha and beta chains form an alternating ring which encloses part of the gamma chain. CF(1) is attached to CF(0) by a central stalk formed by the gamma and epsilon chains, while a peripheral stalk is formed by the delta and b chains.

The protein resides in the cell membrane. The catalysed reaction is ATP + H2O + 4 H(+)(in) = ADP + phosphate + 5 H(+)(out). In terms of biological role, produces ATP from ADP in the presence of a proton gradient across the membrane. The catalytic sites are hosted primarily by the beta subunits. The polypeptide is ATP synthase subunit beta 2 (Mycoplasmopsis pulmonis (strain UAB CTIP) (Mycoplasma pulmonis)).